The following is a 127-amino-acid chain: Glycine cleavage system H protein (127 aa).

Positions 24–105 (TALVGITDFA…YEDGWMVKVS (82 aa)) constitute a Lipoyl-binding domain. The residue at position 65 (Lys-65) is an N6-lipoyllysine.

The protein belongs to the GcvH family. As to quaternary structure, the glycine cleavage system is composed of four proteins: P, T, L and H. (R)-lipoate is required as a cofactor.

Functionally, the glycine cleavage system catalyzes the degradation of glycine. The H protein shuttles the methylamine group of glycine from the P protein to the T protein. The protein is Glycine cleavage system H protein of Prosthecochloris aestuarii (strain DSM 271 / SK 413).